Here is a 564-residue protein sequence, read N- to C-terminus: NAD-dependent malic enzyme (564 aa).

The active-site Proton donor is Y104. Residue R157 participates in NAD(+) binding. The active-site Proton acceptor is the K175. A divalent metal cation contacts are provided by E246, D247, and D270. Positions 270 and 417 each coordinate NAD(+).

It belongs to the malic enzymes family. Homotetramer. Requires Mg(2+) as cofactor. Mn(2+) serves as cofactor.

The enzyme catalyses (S)-malate + NAD(+) = pyruvate + CO2 + NADH. It carries out the reaction oxaloacetate + H(+) = pyruvate + CO2. This is NAD-dependent malic enzyme from Aeromonas salmonicida (strain A449).